The primary structure comprises 294 residues: MRFVIVTGLSGAGKSQAIRSLEDLGYFCVDNLPPTLMGKFAEACYQTDGKIDKIALVIDIRGGEFFDDLFENLKYLKEQNYRYEILFLDASDKVLVKRYKESRRTHPLAPGGRLIQGIELERRRLNEVKYKANNIIDTSNMTQMQLREKIWRIYGDDEQIENRLIIDVLSFGFKYGIPVDADLVFDVRFLPNPYYIPELKQFSGDDKEIQDYVLGFKETKEFIAKLDDMLKFLIPNYIKEGKIQLVVAIGCTGGRHRSVTIANAIYDRLKEKGHKVSKEHRDINEDIKKGGRKL.

8 to 15 contacts ATP; sequence GLSGAGKS. Residue 59–62 participates in GTP binding; that stretch reads DIRG.

Belongs to the RapZ-like family.

Its function is as follows. Displays ATPase and GTPase activities. The polypeptide is Nucleotide-binding protein NT01CX_1284 (Clostridium novyi (strain NT)).